Consider the following 380-residue polypeptide: Elongation factor Ts, mitochondrial (380 aa).

This sequence belongs to the EF-Ts family.

It is found in the mitochondrion. Associates with the EF-Tu.GDP complex and induces the exchange of GDP to GTP. It remains bound to the aminoacyl-tRNA.EF-Tu.GTP complex up to the GTP hydrolysis stage on the ribosome. This is Elongation factor Ts, mitochondrial from Plasmodium chabaudi chabaudi.